We begin with the raw amino-acid sequence, 125 residues long: uncharacterized protein (125 aa).

A run of 3 helical transmembrane segments spans residues 20-42, 57-76, and 81-103; these read RNGG…LTIL, LMNA…GVVV, and YLFV…YMAS.

The protein resides in the cell membrane. This is an uncharacterized protein from Archaeoglobus fulgidus (strain ATCC 49558 / DSM 4304 / JCM 9628 / NBRC 100126 / VC-16).